The primary structure comprises 182 residues: Segregation and condensation protein B (182 aa).

Belongs to the ScpB family. As to quaternary structure, homodimer. Homodimerization may be required to stabilize the binding of ScpA to the Smc head domains. Component of a cohesin-like complex composed of ScpA, ScpB and the Smc homodimer, in which ScpA and ScpB bind to the head domain of Smc. The presence of the three proteins is required for the association of the complex with DNA.

The protein resides in the cytoplasm. Functionally, participates in chromosomal partition during cell division. May act via the formation of a condensin-like complex containing Smc and ScpA that pull DNA away from mid-cell into both cell halves. This Staphylococcus saprophyticus subsp. saprophyticus (strain ATCC 15305 / DSM 20229 / NCIMB 8711 / NCTC 7292 / S-41) protein is Segregation and condensation protein B.